A 280-amino-acid chain; its full sequence is UDP-3-O-acyl-N-acetylglucosamine deacetylase (280 aa).

Zn(2+) contacts are provided by histidine 77, histidine 238, and aspartate 242. Histidine 265 serves as the catalytic Proton donor.

The protein belongs to the LpxC family. Zn(2+) serves as cofactor.

The catalysed reaction is a UDP-3-O-[(3R)-3-hydroxyacyl]-N-acetyl-alpha-D-glucosamine + H2O = a UDP-3-O-[(3R)-3-hydroxyacyl]-alpha-D-glucosamine + acetate. Its pathway is glycolipid biosynthesis; lipid IV(A) biosynthesis; lipid IV(A) from (3R)-3-hydroxytetradecanoyl-[acyl-carrier-protein] and UDP-N-acetyl-alpha-D-glucosamine: step 2/6. Its function is as follows. Catalyzes the hydrolysis of UDP-3-O-myristoyl-N-acetylglucosamine to form UDP-3-O-myristoylglucosamine and acetate, the committed step in lipid A biosynthesis. The chain is UDP-3-O-acyl-N-acetylglucosamine deacetylase from Trichormus variabilis (strain ATCC 29413 / PCC 7937) (Anabaena variabilis).